An 887-amino-acid polypeptide reads, in one-letter code: Phosphatidylinositol 3-kinase catalytic subunit type 3 (887 aa).

One can recognise a C2 PI3K-type domain in the interval 35 to 184 (YKAVLEDPML…LAKLTKAHRQ (150 aa)). Residues 149–170 (VEADGSEPTKTPGRTSSTLSED) form a disordered region. The span at 156–170 (PTKTPGRTSSTLSED) shows a compositional bias: polar residues. Residue Thr163 is modified to Phosphothreonine; by AMPK. Position 165 is a phosphoserine; by AMPK (Ser165). A phosphoserine mark is found at Ser244, Ser261, and Ser282. The region spanning 283–520 (DHDLKPNAAT…PKTHEMYLNV (238 aa)) is the PIK helical domain. The segment at 447 to 467 (TSPLPSVSSPPPASKTKEVPD) is disordered. Residues 605–871 (IPETATLFKS…LIDESVHALF (267 aa)) form the PI3K/PI4K catalytic domain. A G-loop region spans residues 611-617 (LFKSALM). Positions 740–748 (GVGDRHLDN) are catalytic loop. The interval 759–780 (HIDFGYILGRDPKPLPPPMKLN) is activation loop.

It belongs to the PI3/PI4-kinase family. As to quaternary structure, component of the PI3K (PI3KC3/PI3K-III/class III phosphatidylinositol 3-kinase) complex the core of which is composed of the catalytic subunit PIK3C3, the regulatory subunit PIK3R4 and BECN1 associating with additional regulatory/auxiliary subunits to form alternative complex forms. Alternative complex forms containing a fourth regulatory subunit in a mutually exclusive manner are: the PI3K complex I (PI3KC3-C1) containing ATG14, and the PI3K complex II (PI3KC3-C2) containing UVRAG. PI3KC3-C1 displays a V-shaped architecture with PIK3R4 serving as a bridge between PIK3C3 and the ATG14:BECN1 subcomplex. Both, PI3KC3-C1 and PI3KC3-C2, can associate with further regulatory subunits such as RUBCN, SH3GLB1/Bif-1 and AMBRA1. PI3KC3-C1 probably associates with PIK3CB. Interacts with RAB7A in the presence of PIK3R4. Interacts with AMBRA1. Interacts with BECN1P1/BECN2. Interacts with SLAMF1. May be a component of a complex composed of RAB5A (in GDP-bound form), DYN2 and PIK3C3. Interacts with NCKAP1L. Interacts with ATG14; this interaction is increased in the absence of TMEM39A. Interacts with STEEP1; the interaction is STING1-dependent and required for trafficking of STING1 from the endoplasmic reticulum. Interacts with YWHAG. Interacts with ARMC3. Mn(2+) is required as a cofactor. Post-translationally, ubiquitinated via 'Lys-29'- and 'Lys-48'-linked ubiquitination by UBE3C, promoting its degradation. Deubiquitination by ZRANB1/TRABID promotes its stabilization, leading to autophagosome maturation. In terms of tissue distribution, ubiquitously expressed, with a highest expression in skeletal muscle.

It is found in the midbody. Its subcellular location is the late endosome. The protein localises to the cytoplasmic vesicle. The protein resides in the autophagosome. The enzyme catalyses a 1,2-diacyl-sn-glycero-3-phospho-(1D-myo-inositol) + ATP = a 1,2-diacyl-sn-glycero-3-phospho-(1D-myo-inositol-3-phosphate) + ADP + H(+). Catalytic subunit of the PI3K complex that mediates formation of phosphatidylinositol 3-phosphate; different complex forms are believed to play a role in multiple membrane trafficking pathways: PI3KC3-C1 is involved in initiation of autophagosomes and PI3KC3-C2 in maturation of autophagosomes and endocytosis. As part of PI3KC3-C1, promotes endoplasmic reticulum membrane curvature formation prior to vesicle budding. Involved in regulation of degradative endocytic trafficking and required for the abscission step in cytokinesis, probably in the context of PI3KC3-C2. Involved in the transport of lysosomal enzyme precursors to lysosomes. Required for transport from early to late endosomes. Its function is as follows. (Microbial infection) Kinase activity is required for SARS coronavirus-2/SARS-CoV-2 replication. The polypeptide is Phosphatidylinositol 3-kinase catalytic subunit type 3 (Homo sapiens (Human)).